Reading from the N-terminus, the 455-residue chain is ATP-dependent protease ATPase subunit HslU (455 aa).

ATP is bound by residues V23, 65 to 70 (GVGKTE), D266, E333, and R405.

This sequence belongs to the ClpX chaperone family. HslU subfamily. A double ring-shaped homohexamer of HslV is capped on each side by a ring-shaped HslU homohexamer. The assembly of the HslU/HslV complex is dependent on binding of ATP.

Its subcellular location is the cytoplasm. Its function is as follows. ATPase subunit of a proteasome-like degradation complex; this subunit has chaperone activity. The binding of ATP and its subsequent hydrolysis by HslU are essential for unfolding of protein substrates subsequently hydrolyzed by HslV. HslU recognizes the N-terminal part of its protein substrates and unfolds these before they are guided to HslV for hydrolysis. The chain is ATP-dependent protease ATPase subunit HslU from Xanthomonas campestris pv. campestris (strain 8004).